We begin with the raw amino-acid sequence, 414 residues long: Glutamyl-tRNA reductase (414 aa).

Substrate-binding positions include 49–52, Ser108, 113–115, and Gln119; these read TCNR and EPQ. Cys50 functions as the Nucleophile in the catalytic mechanism. 188–193 contributes to the NADP(+) binding site; that stretch reads GAGQTG.

The protein belongs to the glutamyl-tRNA reductase family. In terms of assembly, homodimer.

The enzyme catalyses (S)-4-amino-5-oxopentanoate + tRNA(Glu) + NADP(+) = L-glutamyl-tRNA(Glu) + NADPH + H(+). It participates in porphyrin-containing compound metabolism; protoporphyrin-IX biosynthesis; 5-aminolevulinate from L-glutamyl-tRNA(Glu): step 1/2. Its function is as follows. Catalyzes the NADPH-dependent reduction of glutamyl-tRNA(Glu) to glutamate 1-semialdehyde (GSA). This Francisella tularensis subsp. novicida (strain U112) protein is Glutamyl-tRNA reductase.